A 288-amino-acid chain; its full sequence is Mycothiol S-conjugate amidase (288 aa).

His-12, Asp-15, and His-142 together coordinate Zn(2+).

This sequence belongs to the MshB deacetylase family. Mca subfamily. In terms of assembly, monomer. Zn(2+) serves as cofactor.

The catalysed reaction is mycothiol S-conjugate + H2O = an N-acetyl-L-cysteine-S-conjugate + 1D-myo-inositol 2-amino-2-deoxy-alpha-D-glucopyranoside. With respect to regulation, partially inhibited by MSH when MSmB is used as substrate. Competitively inhibited by the GlcNAc-cyclohexyl derivative 5-(4-chlorophenyl)-N-((2R,3R,4R,5S,6R)-2-(cyclohexylthio)-tetrahydro-4,5-dihydroxy-6-(hydroxymethyl)-2H-pyran-3-yl)furan-2-carboxamide, which also inhibits MshB. Its function is as follows. A mycothiol (MSH, N-acetyl-cysteinyl-glucosaminyl-inositol) S-conjugate amidase, it recycles conjugated MSH to the N-acetyl cysteine conjugate and the MSH precursor. Involved in MSH-dependent detoxification of a number of alkylating agents and antibiotics. Activity is specific for the mycothiol moiety. Has a low but measurable deacetylation activity on GlcNAc-Ins (N-acetyl-glucosaminyl-inositol), and thus can also directly contribute to the production of MSH. The chain is Mycothiol S-conjugate amidase from Mycobacterium tuberculosis (strain ATCC 25618 / H37Rv).